A 146-amino-acid chain; its full sequence is MLSQEFFNSFITIYRPYLKLAEPILEKHNIYYGQWLILRDIAKHQPTTLIEISHRRAIEKPTARKTLKALIENDLITVENSLEDKRQKFLTLTPKGHELYEIVCLDVQKLQQAVVAKTNISQDQMQETINVMNQIHKILLKETHND.

One can recognise an HTH marR-type domain in the interval 1 to 137; sequence MLSQEFFNSF…TINVMNQIHK (137 aa).

This is an uncharacterized protein from Staphylococcus aureus (strain MW2).